The sequence spans 413 residues: Porin PorA (413 aa).

The N-terminal stretch at Met-1–Ala-22 is a signal peptide. A disordered region spans residues Thr-265 to Glu-288.

It belongs to the PorA family.

The protein localises to the secreted. It localises to the cell wall. In terms of biological role, forms water-filled channels that favor the permeation of cations. The chain is Porin PorA from Corynebacterium resistens (strain DSM 45100 / JCM 12819 / GTC 2026 / SICGH 158).